The sequence spans 229 residues: Sugar fermentation stimulation protein homolog (229 aa).

This sequence belongs to the SfsA family.

The sequence is that of Sugar fermentation stimulation protein homolog from Caldanaerobacter subterraneus subsp. tengcongensis (strain DSM 15242 / JCM 11007 / NBRC 100824 / MB4) (Thermoanaerobacter tengcongensis).